We begin with the raw amino-acid sequence, 559 residues long: CTP synthase (559 aa).

The amidoligase domain stretch occupies residues 1-270; sequence MTKFVFVTGG…DGLICDKLRI (270 aa). Residue Ser-13 participates in CTP binding. Ser-13 provides a ligand contact to UTP. ATP-binding positions include 14 to 19 and Asp-71; that span reads SLGKGI. Mg(2+)-binding residues include Asp-71 and Glu-144. CTP-binding positions include 151 to 153, 191 to 196, and Lys-227; these read DIE and KTKPTQ. Residues 191-196 and Lys-227 contribute to the UTP site; that span reads KTKPTQ. Residues 295–547 form the Glutamine amidotransferase type-1 domain; it reads SIAMVGKYVD…IKAALDHKAR (253 aa). Position 356 (Gly-356) interacts with L-glutamine. The active-site Nucleophile; for glutamine hydrolysis is Cys-383. Residues 384-387, Glu-407, and Arg-473 contribute to the L-glutamine site; that span reads LGMQ. Active-site residues include His-520 and Glu-522.

Belongs to the CTP synthase family. In terms of assembly, homotetramer.

It catalyses the reaction UTP + L-glutamine + ATP + H2O = CTP + L-glutamate + ADP + phosphate + 2 H(+). The enzyme catalyses L-glutamine + H2O = L-glutamate + NH4(+). It carries out the reaction UTP + NH4(+) + ATP = CTP + ADP + phosphate + 2 H(+). It participates in pyrimidine metabolism; CTP biosynthesis via de novo pathway; CTP from UDP: step 2/2. With respect to regulation, allosterically activated by GTP, when glutamine is the substrate; GTP has no effect on the reaction when ammonia is the substrate. The allosteric effector GTP functions by stabilizing the protein conformation that binds the tetrahedral intermediate(s) formed during glutamine hydrolysis. Inhibited by the product CTP, via allosteric rather than competitive inhibition. Functionally, catalyzes the ATP-dependent amination of UTP to CTP with either L-glutamine or ammonia as the source of nitrogen. Regulates intracellular CTP levels through interactions with the four ribonucleotide triphosphates. The chain is CTP synthase from Variovorax paradoxus (strain S110).